We begin with the raw amino-acid sequence, 93 residues long: SH3 domain-binding glutamic acid-rich-like protein 3 (93 aa).

Ser2 carries the post-translational modification N-acetylserine. The region spanning Ser2–Ala93 is the Glutaredoxin domain. Thr9 carries O-linked (GalNAc...) threonine glycosylation.

It belongs to the SH3BGR family. As to quaternary structure, homodimer. Interacts with MYO1C (via its IQ motifs); the interaction is dependent on calcium and takes place at membrane ruffles. May be glycosylated.

The protein localises to the cytoplasm. It localises to the cytosol. It is found in the cell projection. Its subcellular location is the ruffle membrane. The protein resides in the nucleus. In terms of biological role, could act as a modulator of glutaredoxin biological activity. May play a role in cytoskeleton organization. The chain is SH3 domain-binding glutamic acid-rich-like protein 3 (Sh3bgrl3) from Mus musculus (Mouse).